We begin with the raw amino-acid sequence, 1130 residues long: BTB/POZ domain-containing protein 7 (1130 aa).

The segment covering 1–10 (MGANASNYPH) has biased composition (polar residues). Residues 1 to 24 (MGANASNYPHSCSPRVGGNSQAQQ) form a disordered region. The N-myristoyl glycine moiety is linked to residue Gly-2. 2 consecutive BTB domains span residues 142-211 (TDVD…GMED) and 247-341 (YDVV…DLSV). The region spanning 413–479 (YGSKWVHRQA…WGEHQLMKRI (67 aa)) is the BACK domain. Ser-722 is subject to Phosphoserine. Disordered stretches follow at residues 898-1050 (SEAG…PAHV) and 1062-1130 (FGLT…KSAL). Basic and acidic residues-rich tracts occupy residues 923–935 (PTLE…RENQ) and 996–1005 (KKQEDPRREY). Ser-1008 carries the post-translational modification Phosphoserine. Residues 1063–1075 (GLTSNRPPSHSAC) are compositionally biased toward polar residues. 2 stretches are compositionally biased toward basic and acidic residues: residues 1080-1090 (LEERSSRRLTD) and 1101-1112 (RNADLERGDSIS).

Specifically expressed in embryonic epithelia.

The protein resides in the nucleus. In terms of biological role, acts as a mediator of epithelial dynamics and organ branching by promoting cleft progression. Induced following accumulation of fibronectin in forming clefts, leading to local expression of the cell-scattering SNAIL2 and suppression of E-cadherin levels, thereby altering cell morphology and reducing cell-cell adhesion. This stimulates cell separation at the base of forming clefts by local, dynamic intercellular gap formation and promotes cleft progression. This Mus musculus (Mouse) protein is BTB/POZ domain-containing protein 7 (Btbd7).